A 308-amino-acid chain; its full sequence is Cilia- and flagella-associated protein 73 (308 aa).

Coiled coils occupy residues Arg-103 to Asn-134 and Leu-164 to Lys-227.

This sequence belongs to the CFAP73 family. In terms of assembly, interacts with FAP100; form the modifier of inner arm (MIA) complex.

Its subcellular location is the cytoplasm. The protein localises to the cytoskeleton. It is found in the flagellum axoneme. Its function is as follows. As part of MIA, a complex associated with the outer doublet microtubules of the axoneme, may play a role in ciliary/flagellar motility by regulating the assembly and the activity of inner dynein arm. The polypeptide is Cilia- and flagella-associated protein 73 (Chlamydomonas reinhardtii (Chlamydomonas smithii)).